Consider the following 194-residue polypeptide: MGAGNTKLSKEEINELIKKTNYTKDQIDKLSKDYNEYSSKDKKSGFTESEFIDFFYCRFRDWDKDLLIQLFKLFDTDCNGILDFKEFVTSLYIMTKAPVVEKLSLLFDLFDKDQSGHLEVDEVEKLIGVAVACGTSLGMDYSGVTNYVFSICSAENMSNKKKGMNKEEFIKAASNSDKFCKMICFYDSMGQMLY.

2 consecutive EF-hand domains span residues 62 to 97 and 98 to 133; these read WDKD…MTKA and PVVE…AVAC. The Ca(2+) site is built by Asp75, Asp77, Asn79, Glu86, Asp111, Asp113, Ser115, His117, and Glu122.

Belongs to the recoverin family.

In Dictyostelium discoideum (Social amoeba), this protein is Calcium-binding protein J (cbpJ).